The sequence spans 460 residues: Adenylyltransferase and sulfurtransferase MOCS3 (460 aa).

Residues Gly-92, Asp-113, Ser-120–Arg-124, Lys-137, and Asp-181–Asn-182 contribute to the ATP site. The interval Pro-158–Asn-238 is interaction with NFS1. Zn(2+)-binding residues include Cys-222 and Cys-225. Cys-239 functions as the Glycyl thioester intermediate; for adenylyltransferase activity in the catalytic mechanism. Zn(2+)-binding residues include Cys-297 and Cys-300. Residues Cys-316 and Cys-324 are joined by a disulfide bond. Residues Ser-347–Pro-458 form the Rhodanese domain. The active-site Cysteine persulfide intermediate; for sulfurtransferase activity is Cys-412. Cys-412 carries the post-translational modification Cysteine persulfide.

This sequence in the N-terminal section; belongs to the HesA/MoeB/ThiF family. UBA4 subfamily. In terms of assembly, interacts with NFS1. Requires Zn(2+) as cofactor.

The protein localises to the cytoplasm. It localises to the cytosol. It catalyses the reaction [molybdopterin-synthase sulfur-carrier protein]-C-terminal Gly-Gly + ATP + H(+) = [molybdopterin-synthase sulfur-carrier protein]-C-terminal Gly-Gly-AMP + diphosphate. It carries out the reaction [molybdopterin-synthase sulfur-carrier protein]-C-terminal Gly-Gly-AMP + S-sulfanyl-L-cysteinyl-[cysteine desulfurase] + AH2 = [molybdopterin-synthase sulfur-carrier protein]-C-terminal-Gly-aminoethanethioate + L-cysteinyl-[cysteine desulfurase] + A + AMP + 2 H(+). The protein operates within tRNA modification; 5-methoxycarbonylmethyl-2-thiouridine-tRNA biosynthesis. Its pathway is cofactor biosynthesis; molybdopterin biosynthesis. Functionally, plays a central role in 2-thiolation of mcm(5)S(2)U at tRNA wobble positions of cytosolic tRNA(Lys), tRNA(Glu) and tRNA(Gln). Also essential during biosynthesis of the molybdenum cofactor. Acts by mediating the C-terminal thiocarboxylation of sulfur carriers URM1 and MOCS2A. Its N-terminus first activates URM1 and MOCS2A as acyl-adenylates (-COAMP), then the persulfide sulfur on the catalytic cysteine is transferred to URM1 and MOCS2A to form thiocarboxylation (-COSH) of their C-terminus. The reaction probably involves hydrogen sulfide that is generated from the persulfide intermediate and that acts as a nucleophile towards URM1 and MOCS2A. Subsequently, a transient disulfide bond is formed. Does not use thiosulfate as sulfur donor; NFS1 acting as a sulfur donor for thiocarboxylation reactions. This is Adenylyltransferase and sulfurtransferase MOCS3 (Mocs3) from Mus musculus (Mouse).